The primary structure comprises 297 residues: Mitochondrial substrate carrier family protein P (297 aa).

Solcar repeat units lie at residues 12–98, 104–189, and 201–293; these read KPSW…IKNH, SSSF…LKRI, and ISGT…LSNF. The next 6 membrane-spanning stretches (helical) occupy residues 15 to 35, 66 to 86, 107 to 127, 165 to 185, 207 to 227, and 262 to 282; these read WVSF…VAPL, GIKG…PYAA, FQIF…TYPL, IQPT…TFEF, LIAG…FDVV, and ILAL…TASI.

Belongs to the mitochondrial carrier (TC 2.A.29) family.

The protein resides in the mitochondrion inner membrane. Mitochondrial solute carriers shuttle metabolites, nucleotides, and cofactors through the mitochondrial inner membrane. Required for the accumulation of coenzyme A in the mitochondrial matrix. This is Mitochondrial substrate carrier family protein P (mcfP) from Dictyostelium discoideum (Social amoeba).